Consider the following 510-residue polypeptide: Hexose carrier protein HEX6 (510 aa).

Over 1 to 22 (MAAGLAITSEGGQYNGRMTSFV) the chain is Cytoplasmic. 12 helical membrane-spanning segments follow: residues 23 to 43 (ALSC…IGVS), 83 to 103 (SFTS…SSVT), 118 to 128 (VFLAXAALGGA), 140 to 160 (VLLG…LSEM), 169 to 189 (INNG…LINY), 202 to 222 (ISLA…LFLP), 284 to 304 (LVMA…VIAF), 325 to 345 (IVTG…VDKL), 349 to 369 (ALFI…GSIM), 382 to 402 (GYAY…GWSW), 428 to 448 (AVSF…LCHF), and 451 to 471 (GIFF…HFLL). The Cytoplasmic segment spans residues 472–510 (PETKKVPIEKMDIVWRDHWFWKKIIGEEAAEENNKMEAA).

It belongs to the major facilitator superfamily. Sugar transporter (TC 2.A.1.1) family.

The protein localises to the membrane. Its function is as follows. Active uptake of hexoses. Probable glucose/hydrogen symport. The protein is Hexose carrier protein HEX6 (HEX6) of Ricinus communis (Castor bean).